The sequence spans 187 residues: Prepilin peptidase-dependent protein B (187 aa).

Positions 1–7 (MPVKEQG) are cleaved as a propeptide — leader sequence. At F8 the chain carries N-methylphenylalanine. The helical transmembrane segment at 8–28 (FSLLEVLIAMAISSVLLLGAA) threads the bilayer.

The protein resides in the membrane. Its function is as follows. Not yet known. In Escherichia coli (strain K12), this protein is Prepilin peptidase-dependent protein B (ppdB).